Consider the following 681-residue polypeptide: Type VI secretion system spike protein VgrG1 (681 aa).

A disordered region spans residues 621-640 (NSGGSPSSGSGWGGKSPVDP).

Belongs to the VgrG protein family.

Its subcellular location is the secreted. It catalyses the reaction L-arginyl-[protein] + NAD(+) = N(omega)-(ADP-D-ribosyl)-L-arginyl-[protein] + nicotinamide + H(+). Part of the type VI secretion system specialized secretion system, which delivers several virulence factors in both prokaryotic and eukaryotic cells during infection. Acts directly as an secreted effector with an actin ADP-ribosyltransferase activity that disrupts the host actin cytoskeleton, leading to a decrease in host cell viability and an increase in apoptosis. In Aeromonas hydrophila, this protein is Type VI secretion system spike protein VgrG1 (vgrG1).